Consider the following 65-residue polypeptide: Large ribosomal subunit protein uL29c (65 aa).

Belongs to the universal ribosomal protein uL29 family.

It localises to the plastid. Its subcellular location is the chloroplast. This is Large ribosomal subunit protein uL29c (rpl29) from Guillardia theta (Cryptophyte).